The primary structure comprises 355 residues: Tyrosine recombinase XerC (355 aa).

One can recognise a Core-binding (CB) domain in the interval 4-89 (TQFDGDIDSF…AVRGFFAWAY (86 aa)). The tract at residues 138 to 180 (DDGGAAAASGSGKAAGKTADKSADTVNRSEAPARADKRDNARV) is disordered. Residues 141-154 (GAAAASGSGKAAGK) show a composition bias toward low complexity. A Tyr recombinase domain is found at 158 to 349 (KSADTVNRSE…SIEQLKNRYG (192 aa)). The span at 168 to 178 (APARADKRDNA) shows a compositional bias: basic and acidic residues. Residues Arg-200, Lys-224, His-301, Arg-304, and His-327 contribute to the active site. Residue Tyr-336 is the O-(3'-phospho-DNA)-tyrosine intermediate of the active site.

This sequence belongs to the 'phage' integrase family. XerC subfamily. Forms a cyclic heterotetrameric complex composed of two molecules of XerC and two molecules of XerD.

It is found in the cytoplasm. Site-specific tyrosine recombinase, which acts by catalyzing the cutting and rejoining of the recombining DNA molecules. The XerC-XerD complex is essential to convert dimers of the bacterial chromosome into monomers to permit their segregation at cell division. It also contributes to the segregational stability of plasmids. In Bifidobacterium longum subsp. infantis (strain ATCC 15697 / DSM 20088 / JCM 1222 / NCTC 11817 / S12), this protein is Tyrosine recombinase XerC.